The sequence spans 642 residues: 1-deoxy-D-xylulose-5-phosphate synthase (642 aa).

Residues His-79 and 120-122 (AHS) each bind thiamine diphosphate. Asp-155 lines the Mg(2+) pocket. Thiamine diphosphate is bound by residues 156-157 (GS), Asn-184, Tyr-293, and Glu-375. Residue Asn-184 participates in Mg(2+) binding.

The protein belongs to the transketolase family. DXPS subfamily. Homodimer. Requires Mg(2+) as cofactor. It depends on thiamine diphosphate as a cofactor.

It catalyses the reaction D-glyceraldehyde 3-phosphate + pyruvate + H(+) = 1-deoxy-D-xylulose 5-phosphate + CO2. It functions in the pathway metabolic intermediate biosynthesis; 1-deoxy-D-xylulose 5-phosphate biosynthesis; 1-deoxy-D-xylulose 5-phosphate from D-glyceraldehyde 3-phosphate and pyruvate: step 1/1. Its function is as follows. Catalyzes the acyloin condensation reaction between C atoms 2 and 3 of pyruvate and glyceraldehyde 3-phosphate to yield 1-deoxy-D-xylulose-5-phosphate (DXP). This Ruegeria pomeroyi (strain ATCC 700808 / DSM 15171 / DSS-3) (Silicibacter pomeroyi) protein is 1-deoxy-D-xylulose-5-phosphate synthase.